We begin with the raw amino-acid sequence, 734 residues long: Monosaccharide-sensing protein 1 (734 aa).

The next 6 helical transmembrane spans lie at 6 to 26 (LVAL…ATIA), 44 to 64 (GLVV…SGPI), 79 to 99 (VMYF…VLCF), 102 to 122 (LLNG…ISET), 133 to 153 (TLPQ…VFTM), and 163 to 183 (AMLG…VFYL). Residues 351 to 403 (YNKDNDDYATDDGAGDDDDSDNDLRSPLMSRQTTSMDKDMIPHPTSGSTLSMR) are disordered. Residues 357–371 (DYATDDGAGDDDDSD) show a composition bias toward acidic residues. Phosphoserine occurs at positions 446 and 480. 6 consecutive transmembrane segments (helical) span residues 510 to 530 (ALVV…NGVL), 556 to 576 (ASFL…VVAM), 588 to 608 (LLWT…SELI), 621 to 641 (GCVV…PNIL), 653 to 673 (LCIA…TYSL), and 680 to 700 (IGLV…WIFV).

It belongs to the major facilitator superfamily. Sugar transporter (TC 2.A.1.1) family. As to quaternary structure, binds to VIK at the tonoplast. Phosphorylated by VIK; this activation promotes carrier activity. Mostly expressed in juvenile and adult leaves, to a lower extent, in flower tissues, and, at low levels, in roots and stems.

Its subcellular location is the vacuole membrane. It carries out the reaction D-glucose(out) + H(+)(in) = D-glucose(in) + H(+)(out). It catalyses the reaction sucrose(out) + H(+)(in) = sucrose(in) + H(+)(out). Enhanced activation by VIK-mediated phosphorylation promoting carrier activity and consequently vacuolar sugar accumulation. Functionally, sugar proton-coupled antiporter which contributes to vacuolar sugar import (e.g. monosaccharides including glucose, sucrose and fructose), particularly during stress responses (e.g. in response to cold). Required for cytosolic glucose homeostasis. In Arabidopsis thaliana (Mouse-ear cress), this protein is Monosaccharide-sensing protein 1.